The following is a 479-amino-acid chain: Cysteine--tRNA ligase (479 aa).

Residue Cys28 coordinates Zn(2+). A 'HIGH' region motif is present at residues Pro30–His40. Cys207, His232, and Glu236 together coordinate Zn(2+). A 'KMSKS' region motif is present at residues Lys264 to Ser268. An ATP-binding site is contributed by Lys267.

This sequence belongs to the class-I aminoacyl-tRNA synthetase family. Zn(2+) serves as cofactor.

It is found in the cytoplasm. It carries out the reaction tRNA(Cys) + L-cysteine + ATP = L-cysteinyl-tRNA(Cys) + AMP + diphosphate. This is Cysteine--tRNA ligase from Methanococcus aeolicus (strain ATCC BAA-1280 / DSM 17508 / OCM 812 / Nankai-3).